Here is a 211-residue protein sequence, read N- to C-terminus: ATP phosphoribosyltransferase (211 aa).

Belongs to the ATP phosphoribosyltransferase family. Short subfamily. In terms of assembly, heteromultimer composed of HisG and HisZ subunits.

The protein localises to the cytoplasm. It carries out the reaction 1-(5-phospho-beta-D-ribosyl)-ATP + diphosphate = 5-phospho-alpha-D-ribose 1-diphosphate + ATP. It functions in the pathway amino-acid biosynthesis; L-histidine biosynthesis; L-histidine from 5-phospho-alpha-D-ribose 1-diphosphate: step 1/9. Its function is as follows. Catalyzes the condensation of ATP and 5-phosphoribose 1-diphosphate to form N'-(5'-phosphoribosyl)-ATP (PR-ATP). Has a crucial role in the pathway because the rate of histidine biosynthesis seems to be controlled primarily by regulation of HisG enzymatic activity. The chain is ATP phosphoribosyltransferase from Hahella chejuensis (strain KCTC 2396).